A 90-amino-acid polypeptide reads, in one-letter code: Phosphocarrier protein NPr (90 aa).

Residues Thr-2 to Asp-90 form the HPr domain. The Pros-phosphohistidine intermediate role is filled by His-16.

It belongs to the HPr family.

It is found in the cytoplasm. Its function is as follows. Component of the phosphoenolpyruvate-dependent nitrogen-metabolic phosphotransferase system (nitrogen-metabolic PTS), that seems to be involved in regulating nitrogen metabolism. The phosphoryl group from phosphoenolpyruvate (PEP) is transferred to the phosphoryl carrier protein NPr by enzyme I-Ntr. Phospho-NPr then transfers it to EIIA-Ntr. Could function in the transcriptional regulation of sigma-54 dependent operons in conjunction with the NPr (PtsO) and EIIA-Ntr (PtsN) proteins. The protein is Phosphocarrier protein NPr (ptsO) of Escherichia coli O157:H7.